A 92-amino-acid chain; its full sequence is Tachykinin-2 (92 aa).

Positions 1-22 (MIRVGLILCCIFIVGVFEASSA) are cleaved as a signal peptide. Positions 23–37 (DDILTAHNLIKRSEV) are excised as a propeptide. A Methionine amide modification is found at M49. Residues 52–92 (SEELTRRLIQHPGSMSETSKRGPPKKGDFNPNELKPESNIC) constitute a propeptide that is removed on maturation. Residues 61-92 (QHPGSMSETSKRGPPKKGDFNPNELKPESNIC) are disordered.

It belongs to the tachykinin family. Expressed in the posterior salivary gland and more specifically in the mucus-secreting gland cells.

Its subcellular location is the secreted. Tachykinins are active peptides which excite neurons, evoke behavioral responses, are potent vasodilators and secretagogues, and contract (directly or indirectly) many smooth muscles. The chain is Tachykinin-2 from Octopus vulgaris (Common octopus).